We begin with the raw amino-acid sequence, 890 residues long: Exo-beta-D-glucosaminidase (890 aa).

The signal sequence occupies residues 1–18 (MIAKAVAALLLGSGLASA). A propeptide spanning residues 19-26 (AGTPLTSK) is cleaved from the precursor. 3 N-linked (GlcNAc...) asparagine glycosylation sites follow: Asn-194, Asn-334, and Asn-438. Catalysis depends on Asp-462, which acts as the Proton donor. Catalysis depends on Glu-537, which acts as the Nucleophile. N-linked (GlcNAc...) asparagine glycosylation is found at Asn-576 and Asn-687.

Belongs to the glycosyl hydrolase 2 family. As to quaternary structure, monomer.

The protein resides in the secreted. Its subcellular location is the extracellular space. The catalysed reaction is Hydrolysis of chitosan or chitosan oligosaccharides to remove successive D-glucosamine residues from the non-reducing termini.. Functionally, hydrolyzes chitosan and chitooligosaccharides with retention of anomeric configuration. Has no activity against beta-D-galactoside, beta-D-glucuronide, beta-D-mannoside, chitin, glycol chitosan, cellulose, N,N'-diacetylchitibiose and pNP-GlcNAc. The protein is Exo-beta-D-glucosaminidase of Hypocrea virens (Gliocladium virens).